The sequence spans 525 residues: Packaging protein UL32 homolog (525 aa).

Residues 1-12 show a composition bias toward polar residues; it reads MAHKVTSANEPN. The disordered stretch occupies residues 1–20; the sequence is MAHKVTSANEPNPLTGKRLS. Residues Cys-95, Cys-98, His-173, Cys-179, Cys-255, Cys-256, Cys-357, Cys-360, His-427, Cys-434, Cys-473, and His-510 each contribute to the Zn(2+) site. Zinc finger stretches follow at residues 95–179, 255–510, and 357–434; these read CRVC…ICRC, CCHL…LRIH, and CPLC…DPLC.

Belongs to the herpesviridae UL32 protein family.

The protein resides in the host cytoplasm. It localises to the host nucleus. In terms of biological role, plays a role in efficient localization of neo-synthesized capsids to nuclear replication compartments, thereby controlling cleavage and packaging of virus genomic DNA. The sequence is that of Packaging protein UL32 homolog from Epstein-Barr virus (strain B95-8) (HHV-4).